Consider the following 289-residue polypeptide: ADP-dependent (S)-NAD(P)H-hydrate dehydratase (289 aa).

In terms of domain architecture, YjeF C-terminal spans V9–L286. The (6S)-NADPHX site is built by A44 and H160. AMP contacts are provided by residues K197–S201 and G226. Position 227 (D227) interacts with (6S)-NADPHX.

The protein belongs to the NnrD/CARKD family. In terms of assembly, homotetramer. It depends on Mg(2+) as a cofactor.

The enzyme catalyses (6S)-NADHX + ADP = AMP + phosphate + NADH + H(+). It carries out the reaction (6S)-NADPHX + ADP = AMP + phosphate + NADPH + H(+). Its function is as follows. Catalyzes the dehydration of the S-form of NAD(P)HX at the expense of ADP, which is converted to AMP. Together with NAD(P)HX epimerase, which catalyzes the epimerization of the S- and R-forms, the enzyme allows the repair of both epimers of NAD(P)HX, a damaged form of NAD(P)H that is a result of enzymatic or heat-dependent hydration. This chain is ADP-dependent (S)-NAD(P)H-hydrate dehydratase, found in Xanthomonas campestris pv. campestris (strain ATCC 33913 / DSM 3586 / NCPPB 528 / LMG 568 / P 25).